A 360-amino-acid chain; its full sequence is 3-dehydroquinate synthase (360 aa).

Residues 71–76 (DGEQYK), 105–109 (GVVGD), 129–130 (TT), Lys-142, Lys-151, and 169–172 (TLNT) contribute to the NAD(+) site. Positions 184, 248, and 265 each coordinate Zn(2+).

Belongs to the sugar phosphate cyclases superfamily. Dehydroquinate synthase family. The cofactor is Co(2+). Zn(2+) serves as cofactor. It depends on NAD(+) as a cofactor.

The protein localises to the cytoplasm. The enzyme catalyses 7-phospho-2-dehydro-3-deoxy-D-arabino-heptonate = 3-dehydroquinate + phosphate. It functions in the pathway metabolic intermediate biosynthesis; chorismate biosynthesis; chorismate from D-erythrose 4-phosphate and phosphoenolpyruvate: step 2/7. Its function is as follows. Catalyzes the conversion of 3-deoxy-D-arabino-heptulosonate 7-phosphate (DAHP) to dehydroquinate (DHQ). In Coxiella burnetii (strain RSA 331 / Henzerling II), this protein is 3-dehydroquinate synthase.